Consider the following 257-residue polypeptide: Snake venom serine protease BITS01A (257 aa).

An N-terminal signal peptide occupies residues 1-18; it reads MVLIRVIANLLILQVSYA. Residues 19–24 constitute a propeptide that is removed on maturation; sequence QKSSEL. The Peptidase S1 domain maps to 25–248; that stretch reads VVGGDECDIN…YLPWIQSIIA (224 aa). 6 disulfide bridges follow: Cys31–Cys162, Cys49–Cys65, Cys97–Cys255, Cys141–Cys209, Cys173–Cys188, and Cys199–Cys224. Catalysis depends on His64, which acts as the Charge relay system. N-linked (GlcNAc...) asparagine glycosylation is present at Asn101. The Charge relay system role is filled by Asp109. N-linked (GlcNAc...) asparagine glycosylation is found at Asn121, Asn153, and Asn169. Catalysis depends on Ser203, which acts as the Charge relay system. Asn210 and Asn250 each carry an N-linked (GlcNAc...) asparagine glycan.

It belongs to the peptidase S1 family. Snake venom subfamily. As to quaternary structure, monomer. As to expression, expressed by the venom gland.

The protein localises to the secreted. Functionally, snake venom serine protease that may act in the hemostasis system of the prey. This Bothrops insularis (Golden lancehead) protein is Snake venom serine protease BITS01A.